Reading from the N-terminus, the 89-residue chain is Small ribosomal subunit protein uS15 (89 aa).

This sequence belongs to the universal ribosomal protein uS15 family. Part of the 30S ribosomal subunit. Forms a bridge to the 50S subunit in the 70S ribosome, contacting the 23S rRNA.

Functionally, one of the primary rRNA binding proteins, it binds directly to 16S rRNA where it helps nucleate assembly of the platform of the 30S subunit by binding and bridging several RNA helices of the 16S rRNA. Its function is as follows. Forms an intersubunit bridge (bridge B4) with the 23S rRNA of the 50S subunit in the ribosome. The polypeptide is Small ribosomal subunit protein uS15 (Crocosphaera subtropica (strain ATCC 51142 / BH68) (Cyanothece sp. (strain ATCC 51142))).